The sequence spans 302 residues: uncharacterized protein (302 aa).

An N-terminal signal peptide occupies residues 1–28 (MNKLTAQNLLKKSRFLKYSLLTSISVGA).

This is an uncharacterized protein from Rickettsia prowazekii (strain Madrid E).